The sequence spans 277 residues: Peptide deformylase 1A, chloroplastic (277 aa).

Residues Cys196 and His238 each coordinate Zn(2+). Glu239 is a catalytic residue. Residue His242 coordinates Zn(2+).

The protein belongs to the polypeptide deformylase family. Zn(2+) is required as a cofactor.

It localises to the plastid. The protein resides in the chloroplast stroma. The catalysed reaction is N-terminal N-formyl-L-methionyl-[peptide] + H2O = N-terminal L-methionyl-[peptide] + formate. Removes the formyl group from the N-terminal Met of newly synthesized proteins. The chain is Peptide deformylase 1A, chloroplastic (PDF1A) from Solanum lycopersicum (Tomato).